Here is a 141-residue protein sequence, read N- to C-terminus: Large ribosomal subunit protein uL16 (141 aa).

It belongs to the universal ribosomal protein uL16 family. In terms of assembly, part of the 50S ribosomal subunit.

In terms of biological role, binds 23S rRNA and is also seen to make contacts with the A and possibly P site tRNAs. The polypeptide is Large ribosomal subunit protein uL16 (Campylobacter hominis (strain ATCC BAA-381 / DSM 21671 / CCUG 45161 / LMG 19568 / NCTC 13146 / CH001A)).